We begin with the raw amino-acid sequence, 336 residues long: Holliday junction branch migration complex subunit RuvB (336 aa).

The segment at 1–181 (MDRIVEIEKF…FGMQFRLEFY (181 aa)) is large ATPase domain (RuvB-L). Residues L20, R21, G62, K65, T66, T67, 128–130 (EDF), R171, Y181, and R218 contribute to the ATP site. Mg(2+) is bound at residue T66. The interval 182–252 (KNEELAIILE…RAKEALDSLG (71 aa)) is small ATPAse domain (RuvB-S). Positions 255–336 (ELGFDAMDLR…KYNKGLFDEK (82 aa)) are head domain (RuvB-H). Residues R309 and R314 each coordinate DNA.

Belongs to the RuvB family. In terms of assembly, homohexamer. Forms an RuvA(8)-RuvB(12)-Holliday junction (HJ) complex. HJ DNA is sandwiched between 2 RuvA tetramers; dsDNA enters through RuvA and exits via RuvB. An RuvB hexamer assembles on each DNA strand where it exits the tetramer. Each RuvB hexamer is contacted by two RuvA subunits (via domain III) on 2 adjacent RuvB subunits; this complex drives branch migration. In the full resolvosome a probable DNA-RuvA(4)-RuvB(12)-RuvC(2) complex forms which resolves the HJ.

It localises to the cytoplasm. It carries out the reaction ATP + H2O = ADP + phosphate + H(+). In terms of biological role, the RuvA-RuvB-RuvC complex processes Holliday junction (HJ) DNA during genetic recombination and DNA repair, while the RuvA-RuvB complex plays an important role in the rescue of blocked DNA replication forks via replication fork reversal (RFR). RuvA specifically binds to HJ cruciform DNA, conferring on it an open structure. The RuvB hexamer acts as an ATP-dependent pump, pulling dsDNA into and through the RuvAB complex. RuvB forms 2 homohexamers on either side of HJ DNA bound by 1 or 2 RuvA tetramers; 4 subunits per hexamer contact DNA at a time. Coordinated motions by a converter formed by DNA-disengaged RuvB subunits stimulates ATP hydrolysis and nucleotide exchange. Immobilization of the converter enables RuvB to convert the ATP-contained energy into a lever motion, pulling 2 nucleotides of DNA out of the RuvA tetramer per ATP hydrolyzed, thus driving DNA branch migration. The RuvB motors rotate together with the DNA substrate, which together with the progressing nucleotide cycle form the mechanistic basis for DNA recombination by continuous HJ branch migration. Branch migration allows RuvC to scan DNA until it finds its consensus sequence, where it cleaves and resolves cruciform DNA. The protein is Holliday junction branch migration complex subunit RuvB of Campylobacter lari (strain RM2100 / D67 / ATCC BAA-1060).